The following is a 344-amino-acid chain: Aurora kinase B (344 aa).

Thr-35 is subject to Phosphothreonine. Residues 46–65 (NAQPTAAPGQKVVENSSGTP) are disordered. The residue at position 62 (Ser-62) is a Phosphoserine. Phosphothreonine is present on Thr-64. The region spanning 77–327 (FEIGRPLGKG…LAQVSAHPWV (251 aa)) is the Protein kinase domain. ATP is bound by residues 83–91 (LGKGKFGNV) and Lys-106. The active-site Proton acceptor is the Asp-200. The residue at position 215 (Lys-215) is an N6-acetyllysine. A Phosphoserine modification is found at Ser-227. Thr-232 carries the phosphothreonine; by autocatalysis modification.

This sequence belongs to the protein kinase superfamily. Ser/Thr protein kinase family. Aurora subfamily. As to quaternary structure, component of the chromosomal passenger complex (CPC) composed of at least BIRC5/survivin, CDCA8/borealin, INCENP, AURKB or AURKC; predominantly independent AURKB- and AURKC-containing complexes exist. Associates with RACGAP1 during M phase. Interacts with SPDYC; this interaction may be required for proper localization of active, Thr-232-phosphorylated AURKB form during prometaphase and metaphase. Interacts with p53/TP53. Interacts (via the middle kinase domain) with NOC2L (via the N- and C-terminus domains). Interacts with CDCA1. Interacts with EVI5. Interacts with JTB. Interacts with NDC80. Interacts with PSMA3. Interacts with RNF2/RING1B. Interacts with SEPTIN1. Interacts with SIRT2. Interacts with TACC1. Interacts with TTC28. Post-translationally, the phosphorylation of Thr-232 requires the binding to INCENP and occurs by means of an autophosphorylation mechanism. Thr-232 phosphorylation is indispensable for the AURKB kinase activity. In terms of processing, acetylated at Lys-215 by KAT5 at kinetochores, increasing AURKB activity and promoting accurate chromosome segregation in mitosis. Ubiquitinated by different BCR (BTB-CUL3-RBX1) E3 ubiquitin ligase complexes. Ubiquitinated by the BCR(KLHL9-KLHL13) E3 ubiquitin ligase complex, ubiquitination leads to removal from mitotic chromosomes and is required for cytokinesis. During anaphase, the BCR(KLHL21) E3 ubiquitin ligase complex recruits the CPC complex from chromosomes to the spindle midzone and mediates the ubiquitination of AURKB. Ubiquitination of AURKB by BCR(KLHL21) E3 ubiquitin ligase complex may not lead to its degradation by the proteasome. Deubiquitinated by USP35; inhibiting CDH1-mediated degradation of AURKB.

The protein localises to the nucleus. It localises to the chromosome. The protein resides in the centromere. It is found in the kinetochore. Its subcellular location is the cytoplasm. The protein localises to the cytoskeleton. It localises to the spindle. The protein resides in the midbody. The enzyme catalyses L-seryl-[protein] + ATP = O-phospho-L-seryl-[protein] + ADP + H(+). The catalysed reaction is L-threonyl-[protein] + ATP = O-phospho-L-threonyl-[protein] + ADP + H(+). Its activity is regulated as follows. Activity is greatly increased when AURKB is within the CPC complex. In particular, AURKB-phosphorylated INCENP acts as an activator of AURKB. Positive feedback between HASPIN and AURKB contributes to CPC localization. Functionally, serine/threonine-protein kinase component of the chromosomal passenger complex (CPC), a complex that acts as a key regulator of mitosis. The CPC complex has essential functions at the centromere in ensuring correct chromosome alignment and segregation and is required for chromatin-induced microtubule stabilization and spindle assembly. Involved in the bipolar attachment of spindle microtubules to kinetochores and is a key regulator for the onset of cytokinesis during mitosis. Required for central/midzone spindle assembly and cleavage furrow formation. Key component of the cytokinesis checkpoint, a process required to delay abscission to prevent both premature resolution of intercellular chromosome bridges and accumulation of DNA damage: phosphorylates CHMP4C, leading to retain abscission-competent VPS4 (VPS4A and/or VPS4B) at the midbody ring until abscission checkpoint signaling is terminated at late cytokinesis. AURKB phosphorylates the CPC complex subunits BIRC5/survivin, CDCA8/borealin and INCENP. Phosphorylation of INCENP leads to increased AURKB activity. Other known AURKB substrates involved in centromeric functions and mitosis are CENPA, DES/desmin, GPAF, KIF2C, NSUN2, RACGAP1, SEPTIN1, VIM/vimentin, HASPIN, and histone H3. A positive feedback loop involving HASPIN and AURKB contributes to localization of CPC to centromeres. Phosphorylation of VIM controls vimentin filament segregation in cytokinetic process, whereas histone H3 is phosphorylated at 'Ser-10' and 'Ser-28' during mitosis (H3S10ph and H3S28ph, respectively). AURKB is also required for kinetochore localization of BUB1 and SGO1. Phosphorylation of p53/TP53 negatively regulates its transcriptional activity. Key regulator of active promoters in resting B- and T-lymphocytes: acts by mediating phosphorylation of H3S28ph at active promoters in resting B-cells, inhibiting RNF2/RING1B-mediated ubiquitination of histone H2A and enhancing binding and activity of the USP16 deubiquitinase at transcribed genes. Acts as an inhibitor of CGAS during mitosis: catalyzes phosphorylation of the N-terminus of CGAS during the G2-M transition, blocking CGAS liquid phase separation and activation, and thereby preventing CGAS-induced autoimmunity. Phosphorylates KRT5 during anaphase and telophase. Phosphorylates ATXN10 which promotes phosphorylation of ATXN10 by PLK1 and may play a role in the regulation of cytokinesis and stimulating the proteasomal degradation of ATXN10. This chain is Aurora kinase B (AURKB), found in Bos taurus (Bovine).